The chain runs to 62 residues: Large ribosomal subunit protein uL29 (62 aa).

This sequence belongs to the universal ribosomal protein uL29 family.

The protein is Large ribosomal subunit protein uL29 of Chromobacterium violaceum (strain ATCC 12472 / DSM 30191 / JCM 1249 / CCUG 213 / NBRC 12614 / NCIMB 9131 / NCTC 9757 / MK).